Consider the following 165-residue polypeptide: uncharacterized protein (165 aa).

The helical transmembrane segment at 20–40 (INLIASIVLWLLFVITVIGTF) threads the bilayer. Asn-51 carries an N-linked (GlcNAc...) asparagine; by host glycan. The helical transmembrane segment at 97–117 (VGIIVILIFMLMIIMNGFYQM) threads the bilayer.

The protein resides in the membrane. This is an uncharacterized protein from Acanthamoeba polyphaga (Amoeba).